We begin with the raw amino-acid sequence, 125 residues long: Antitoxin MazE5 (125 aa).

As to quaternary structure, forms a complex with cognate toxin MazF5.

Functionally, antitoxin component of a type II toxin-antitoxin (TA) system. Upon expression in M.smegmatis neutralizes the effect of cognate toxin MazF5. This is Antitoxin MazE5 (mazE5) from Mycobacterium tuberculosis (strain ATCC 25618 / H37Rv).